The chain runs to 953 residues: Translation initiation factor IF-2 (953 aa).

Disordered stretches follow at residues 51-242 (SKAS…QEAK) and 279-363 (TKLK…TERK). Basic and acidic residues-rich tracts occupy residues 80–89 (TGSEHVEKTQ) and 98–111 (FKAE…EQAA). Positions 131 to 140 (QPNNHQTNEQ) are enriched in polar residues. Over residues 149–188 (SQGDTNDKRIERKASNVSPRHDNHQLVGDRNRSFAKENHK) the composition is skewed to basic and acidic residues. Residues 191-207 (RFTNQKKQGRQEPQSKS) show a composition bias toward polar residues. Over residues 229–242 (RQSETRFRAQQEAK) the composition is skewed to basic and acidic residues. A compositionally biased stretch (polar residues) spans 282 to 291 (KSSNISAKST). Basic and acidic residues predominate over residues 300-317 (ARPEKNRELTHHSQEGQK). Over residues 322–338 (SWNSQNQVRNQKNSNWN) the composition is skewed to low complexity. The span at 339 to 348 (KNKKTKKGKN) shows a compositional bias: basic residues. The tr-type G domain occupies 454–623 (ERAPVVTIMG…LLVAEVEELK (170 aa)). The interval 463-470 (GHVDHGKT) is G1. 463–470 (GHVDHGKT) serves as a coordination point for GTP. Positions 488–492 (GITQH) are G2. Residues 509-512 (DTPG) are G3. Residues 509–513 (DTPGH) and 563–566 (NKID) each bind GTP. The interval 563-566 (NKID) is G4. The interval 599–601 (SAK) is G5.

The protein belongs to the TRAFAC class translation factor GTPase superfamily. Classic translation factor GTPase family. IF-2 subfamily.

The protein localises to the cytoplasm. Its function is as follows. One of the essential components for the initiation of protein synthesis. Protects formylmethionyl-tRNA from spontaneous hydrolysis and promotes its binding to the 30S ribosomal subunits. Also involved in the hydrolysis of GTP during the formation of the 70S ribosomal complex. This chain is Translation initiation factor IF-2, found in Streptococcus pyogenes serotype M49 (strain NZ131).